Here is a 407-residue protein sequence, read N- to C-terminus: Elongation factor Tu (407 aa).

The tr-type G domain occupies 10–217 (KPHVNVGTIG…ALDSYIPEPE (208 aa)). Residues 19-26 (GHVDHGKT) are G1. 19–26 (GHVDHGKT) is a binding site for GTP. Threonine 26 provides a ligand contact to Mg(2+). The segment at 60–64 (GITIA) is G2. Residues 81–84 (DCPG) form a G3 region. GTP contacts are provided by residues 81–85 (DCPGH) and 136–139 (NKAD). The G4 stretch occupies residues 136-139 (NKAD). The tract at residues 184-186 (SAL) is G5.

Belongs to the TRAFAC class translation factor GTPase superfamily. Classic translation factor GTPase family. EF-Tu/EF-1A subfamily. Monomer.

It is found in the cytoplasm. It carries out the reaction GTP + H2O = GDP + phosphate + H(+). Its function is as follows. GTP hydrolase that promotes the GTP-dependent binding of aminoacyl-tRNA to the A-site of ribosomes during protein biosynthesis. The polypeptide is Elongation factor Tu (Saccharophagus degradans (strain 2-40 / ATCC 43961 / DSM 17024)).